We begin with the raw amino-acid sequence, 359 residues long: sn-1 linoleoyl-lipid 6-desaturase (359 aa).

2 helical membrane-spanning segments follow: residues 45–65 (LIIVLWLFSAWAFVLFAPVIF) and 69–89 (LLGCMVLAIALAAFSFNVGHD). The Histidine box-1 signature appears at 88–92 (HDANH). A Histidine box-2 motif is present at residues 123–128 (HNYLHH). The next 3 membrane-spanning stretches (helical) occupy residues 165–185 (IWGLYLFIPFYWFLYDVYLVL), 206–226 (LLGIKLLWLGYVFGLPLALGF), and 231–251 (VLIGASVTYMTYGIVVCTIFM). The Histidine box-3 motif lies at 306–310 (HHLFP).

Belongs to the fatty acid desaturase type 2 family. It depends on Fe(2+) as a cofactor.

The protein resides in the membrane. The enzyme catalyses a 1-[(9Z,12Z)-octadecdienoyl]-2-acyl-glycerolipid + 2 reduced [2Fe-2S]-[ferredoxin] + O2 + 2 H(+) = a 1-[(6Z,9Z,12Z)-octadectrienoyl]-2-acyl-glycerolipid + 2 oxidized [2Fe-2S]-[ferredoxin] + 2 H2O. Its pathway is lipid metabolism; polyunsaturated fatty acid biosynthesis. In terms of biological role, desaturase involved in fatty acid biosynthesis. Introduces a double bond at carbon 6 of linoleoyl group (18:2) attached to the sn-1 position of the glycerol moiety of membrane glycerolipids, leading to the formation of gamma-linolenic acid (GLA). The polypeptide is sn-1 linoleoyl-lipid 6-desaturase (Synechocystis sp. (strain ATCC 27184 / PCC 6803 / Kazusa)).